Reading from the N-terminus, the 341-residue chain is THO complex subunit 6 (341 aa).

WD repeat units follow at residues 22-61, 74-112, 124-165, 166-205, 215-254, 256-293, and 295-339; these read RLHM…SSEA, AHDG…GCKE, LEVP…RVLR, GHTD…EVQT, SRPH…PTTI, PIRA…KAQV, and GSSP…AFSL. Ser-180 carries the phosphoserine modification.

Belongs to the WD repeat THOC6 family. As to quaternary structure, component of the THO subcomplex, which is composed of THOC1, THOC2, THOC3, THOC5, THOC6 and THOC7. The THO subcomplex interacts with DDX39B to form the THO-DDX39B complex which multimerizes into a 28-subunit tetrameric assembly. Component of the transcription/export (TREX) complex at least composed of ALYREF/THOC4, DDX39B, SARNP/CIP29, CHTOP and the THO subcomplex; in the complex interacts with THOC5; together with THOC5 and THOC7, plays a key structural role in the oligomerization of the THO-DDX39B complex. TREX seems to have a dynamic structure involving ATP-dependent remodeling.

Its subcellular location is the nucleus. It localises to the nucleus speckle. In terms of biological role, component of the THO subcomplex of the TREX complex which is thought to couple mRNA transcription, processing and nuclear export, and which specifically associates with spliced mRNA and not with unspliced pre-mRNA. Plays a key structural role in the oligomerization of the THO-DDX39B complex. TREX is recruited to spliced mRNAs by a transcription-independent mechanism, binds to mRNA upstream of the exon-junction complex (EJC) and is recruited in a splicing- and cap-dependent manner to a region near the 5' end of the mRNA where it functions in mRNA export to the cytoplasm via the TAP/NXF1 pathway. Plays a role in apoptosis negative control involved in brain development. Its function is as follows. (Microbial infection) The TREX complex is essential for the export of Kaposi's sarcoma-associated herpesvirus (KSHV) intronless mRNAs and infectious virus production. The polypeptide is THO complex subunit 6 (THOC6) (Homo sapiens (Human)).